The sequence spans 605 residues: Elongation factor 4 (605 aa).

The tr-type G domain maps to 11-193 (KRIRNFSIIA…QIVTRISPPQ (183 aa)). Residues 23 to 28 (DHGKST) and 140 to 143 (NKVD) contribute to the GTP site.

This sequence belongs to the TRAFAC class translation factor GTPase superfamily. Classic translation factor GTPase family. LepA subfamily.

The protein localises to the cell membrane. It carries out the reaction GTP + H2O = GDP + phosphate + H(+). In terms of biological role, required for accurate and efficient protein synthesis under certain stress conditions. May act as a fidelity factor of the translation reaction, by catalyzing a one-codon backward translocation of tRNAs on improperly translocated ribosomes. Back-translocation proceeds from a post-translocation (POST) complex to a pre-translocation (PRE) complex, thus giving elongation factor G a second chance to translocate the tRNAs correctly. Binds to ribosomes in a GTP-dependent manner. The sequence is that of Elongation factor 4 from Onion yellows phytoplasma (strain OY-M).